Reading from the N-terminus, the 294-residue chain is Elongation factor Ts (294 aa).

The segment at 79–82 (TDFV) is involved in Mg(2+) ion dislocation from EF-Tu.

It belongs to the EF-Ts family.

It is found in the cytoplasm. Associates with the EF-Tu.GDP complex and induces the exchange of GDP to GTP. It remains bound to the aminoacyl-tRNA.EF-Tu.GTP complex up to the GTP hydrolysis stage on the ribosome. This is Elongation factor Ts from Oceanobacillus iheyensis (strain DSM 14371 / CIP 107618 / JCM 11309 / KCTC 3954 / HTE831).